The primary structure comprises 570 residues: Proline--tRNA ligase (570 aa).

It belongs to the class-II aminoacyl-tRNA synthetase family. ProS type 1 subfamily. As to quaternary structure, homodimer.

The protein resides in the cytoplasm. The catalysed reaction is tRNA(Pro) + L-proline + ATP = L-prolyl-tRNA(Pro) + AMP + diphosphate. Functionally, catalyzes the attachment of proline to tRNA(Pro) in a two-step reaction: proline is first activated by ATP to form Pro-AMP and then transferred to the acceptor end of tRNA(Pro). As ProRS can inadvertently accommodate and process non-cognate amino acids such as alanine and cysteine, to avoid such errors it has two additional distinct editing activities against alanine. One activity is designated as 'pretransfer' editing and involves the tRNA(Pro)-independent hydrolysis of activated Ala-AMP. The other activity is designated 'posttransfer' editing and involves deacylation of mischarged Ala-tRNA(Pro). The misacylated Cys-tRNA(Pro) is not edited by ProRS. This chain is Proline--tRNA ligase, found in Neisseria gonorrhoeae (strain ATCC 700825 / FA 1090).